We begin with the raw amino-acid sequence, 707 residues long: ATP-dependent RNA helicase DHX33 (707 aa).

The interval 1-64 is disordered; sequence MPEEAGFPPA…LAQPSASPYP (64 aa). The interval 1 to 80 is required for nucleolar location; sequence MPEEAGFPPA…RRSLPIFQAR (80 aa). Residues 39 to 49 show a composition bias toward gly residues; it reads GSGGRGGGGGR. Positions 50 to 64 are enriched in low complexity; the sequence is RQQPPLAQPSASPYP. The Helicase ATP-binding domain maps to 84–252; it reads LAQLRNLDNA…FNGAPVLYLE (169 aa). 97-104 lines the ATP pocket; sequence GETGSGKT. The DEAH box signature appears at 194–197; sequence DEAH. The Helicase C-terminal domain occupies 277-450; that stretch reads SVFQIHQEAP…SVMLQLLAMK (174 aa). An HA2; required for interaction with EIF3G and RPL26 region spans residues 471–562; the sequence is AIAQLDLLGA…ISSEGDHMTL (92 aa). A Critical for rDNA-binding motif is present at residues 547-558; it reads GVRKKFISSEGD.

This sequence belongs to the DEAD box helicase family. DEAH subfamily. As to quaternary structure, interacts with UBTF. Interacts with DDX3X, EIF3G and EIF3H; the interaction is independent of RNA. Interacts (via HA2 region and Helicase C-terminal domain) with the components of the large ribosomal subunit RPL3, RPL7, RPL26 and RPL27. Interacts (via DEAH box) with NLRP3 (via NACHT domain). Binds to mRNA. Binds to double-stranded RNA (via the helicase C-terminal domain). Interacts (via the helicase C-terminal domain) with MAVS. Ubiquitinated, leading to its degradation by the proteasome. Deubiquitinated by USP36.

The protein localises to the nucleus. It localises to the nucleolus. It is found in the nucleoplasm. The protein resides in the cytoplasm. Its subcellular location is the inflammasome. The catalysed reaction is ATP + H2O = ADP + phosphate + H(+). Implicated in nucleolar organization, ribosome biogenesis, protein synthesis and cytoplasmic dsRNA sensing. Stimulates RNA polymerase I transcription of the 47S precursor rRNA. Associates with ribosomal DNA (rDNA) loci where it is involved in POLR1A recruitment. In the cytoplasm, promotes elongation-competent 80S ribosome assembly at the late stage of mRNA translation initiation. Senses cytosolic dsRNA mediating NLRP3 inflammasome formation in macrophages and type I interferon production in myeloid dendritic cells. Required for NLRP3 activation induced by viral dsRNA and bacterial RNA. In dendritic cells, required for induction of type I interferon production induced by cytoplasmic dsRNA via the activation of MAPK and NF-kappa-B signaling pathways. This Homo sapiens (Human) protein is ATP-dependent RNA helicase DHX33.